The chain runs to 484 residues: Glycogen synthase (484 aa).

Lys15 is an ADP-alpha-D-glucose binding site.

The protein belongs to the glycosyltransferase 1 family. Bacterial/plant glycogen synthase subfamily.

The catalysed reaction is [(1-&gt;4)-alpha-D-glucosyl](n) + ADP-alpha-D-glucose = [(1-&gt;4)-alpha-D-glucosyl](n+1) + ADP + H(+). Its pathway is glycan biosynthesis; glycogen biosynthesis. Its function is as follows. Synthesizes alpha-1,4-glucan chains using ADP-glucose. This chain is Glycogen synthase (glgA), found in Bacillus subtilis (strain 168).